Here is a 77-residue protein sequence, read N- to C-terminus: U14-theraphotoxin-Cg1a 3 (77 aa).

The first 21 residues, 1-21 (MKTSVLLVILGIAAITVQCTA), serve as a signal peptide directing secretion. The propeptide occupies 22–49 (SESVEQDSLRTFVDTVLGWNAEMASEAR). Disulfide bonds link Cys-50/Cys-64, Cys-57/Cys-69, and Cys-63/Cys-75. At Lys-77 the chain carries Lysine amide.

This sequence belongs to the neurotoxin 10 (Hwtx-1) family. 65 (Jztx-21) subfamily. Expressed by the venom gland.

It is found in the secreted. Its function is as follows. Probable ion channel inhibitor. This is U14-theraphotoxin-Cg1a 3 from Chilobrachys guangxiensis (Chinese earth tiger tarantula).